The chain runs to 74 residues: RNA-binding protein Hfq (74 aa).

Positions Asp9 to Val69 constitute a Sm domain.

It belongs to the Hfq family. As to quaternary structure, homohexamer.

Functionally, RNA chaperone that binds small regulatory RNA (sRNAs) and mRNAs to facilitate mRNA translational regulation in response to envelope stress, environmental stress and changes in metabolite concentrations. Also binds with high specificity to tRNAs. The polypeptide is RNA-binding protein Hfq (Anoxybacillus flavithermus (strain DSM 21510 / WK1)).